We begin with the raw amino-acid sequence, 99 residues long: Protein SPIRAL1-like 5 (99 aa).

The segment covering 1 to 12 has biased composition (gly residues); it reads MSRGGSFGGGQS. Residues 1-99 form a disordered region; it reads MSRGGSFGGG…SSLGYLFGDK (99 aa). Residues 27–39 are compositionally biased toward pro residues; sequence TPAPPVAPKPAPP. A compositionally biased stretch (polar residues) spans 56–73; that stretch reads KISNNNYQRVQGQNSGNF. A Phosphoserine modification is found at serine 58.

Belongs to the SPIRAL1 family. As to expression, expressed exclusively in stems and flowers.

Acts redundantly with SPR1 in maintaining the cortical microtubules organization essential for anisotropic cell growth. The polypeptide is Protein SPIRAL1-like 5 (SP1L5) (Arabidopsis thaliana (Mouse-ear cress)).